The primary structure comprises 388 residues: Protein DJ-1 homolog D (388 aa).

2 PfpI endopeptidase domains span residues Arg5–Gly190 and Lys198–Gly383. The Nucleophile role is filled by Cys120. Cys120 is modified (cysteine sulfenic acid (-SOH)). His121 is an active-site residue. The Nucleophile role is filled by Cys313. At Cys313 the chain carries Cysteine sulfinic acid (-SO2H). His314 is a catalytic residue.

It belongs to the peptidase C56 family. In terms of assembly, homotrimer. In terms of processing, cys-120 and Cys-313 are oxidized to sulfinic acid.

The enzyme catalyses (R)-S-lactoylglutathione = methylglyoxal + glutathione. Its function is as follows. Possesses glyoxalase I activity. Catalyzes the conversion of hemimercaptal, formed from methylglyoxal and glutathione, to S-lactoylglutathione. May be involved in oxidative stress response. This Arabidopsis thaliana (Mouse-ear cress) protein is Protein DJ-1 homolog D (DJ1D).